A 92-amino-acid polypeptide reads, in one-letter code: Small ribosomal subunit protein uS19 (92 aa).

It belongs to the universal ribosomal protein uS19 family.

Functionally, protein S19 forms a complex with S13 that binds strongly to the 16S ribosomal RNA. This chain is Small ribosomal subunit protein uS19, found in Nitrobacter winogradskyi (strain ATCC 25391 / DSM 10237 / CIP 104748 / NCIMB 11846 / Nb-255).